A 112-amino-acid chain; its full sequence is Ribonuclease P protein component (112 aa).

Belongs to the RnpA family. As to quaternary structure, consists of a catalytic RNA component (M1 or rnpB) and a protein subunit.

It carries out the reaction Endonucleolytic cleavage of RNA, removing 5'-extranucleotides from tRNA precursor.. Functionally, RNaseP catalyzes the removal of the 5'-leader sequence from pre-tRNA to produce the mature 5'-terminus. It can also cleave other RNA substrates such as 4.5S RNA. The protein component plays an auxiliary but essential role in vivo by binding to the 5'-leader sequence and broadening the substrate specificity of the ribozyme. The chain is Ribonuclease P protein component from Mesomycoplasma hyopneumoniae (strain 7448) (Mycoplasma hyopneumoniae).